The sequence spans 204 residues: Putative rubrerythrin (204 aa).

Residues 1-159 (MINNFFVINM…KLLKEVEEGT (159 aa)) enclose the Ferritin-like diiron domain. The Fe(3+) site is built by glutamate 24, glutamate 57, glutamate 107, glutamate 110, glutamate 141, histidine 144, cysteine 171, cysteine 174, cysteine 187, and cysteine 190. The region spanning 166 to 204 (PVEWVCRKCGFVHLGKEPPEKCPSCSHPRKYFEVKCEKY) is the Rubredoxin-like domain.

In terms of assembly, homodimer. Possesses two rubredoxin-like centers and two non-sulfur oxo-bridged di-iron centers per dimer. Requires Fe(3+) as cofactor.

The protein localises to the cytoplasm. In terms of biological role, may provide oxidative stress protection via catalytic reduction of intracellular hydrogen peroxide. This Methanocaldococcus jannaschii (strain ATCC 43067 / DSM 2661 / JAL-1 / JCM 10045 / NBRC 100440) (Methanococcus jannaschii) protein is Putative rubrerythrin.